The primary structure comprises 304 residues: UDP-3-O-acyl-N-acetylglucosamine deacetylase (304 aa).

The Zn(2+) site is built by His-79, His-238, and Asp-242. The active-site Proton donor is the His-265.

It belongs to the LpxC family. Zn(2+) serves as cofactor.

The enzyme catalyses a UDP-3-O-[(3R)-3-hydroxyacyl]-N-acetyl-alpha-D-glucosamine + H2O = a UDP-3-O-[(3R)-3-hydroxyacyl]-alpha-D-glucosamine + acetate. It functions in the pathway glycolipid biosynthesis; lipid IV(A) biosynthesis; lipid IV(A) from (3R)-3-hydroxytetradecanoyl-[acyl-carrier-protein] and UDP-N-acetyl-alpha-D-glucosamine: step 2/6. Functionally, catalyzes the hydrolysis of UDP-3-O-myristoyl-N-acetylglucosamine to form UDP-3-O-myristoylglucosamine and acetate, the committed step in lipid A biosynthesis. In Chromobacterium violaceum (strain ATCC 12472 / DSM 30191 / JCM 1249 / CCUG 213 / NBRC 12614 / NCIMB 9131 / NCTC 9757 / MK), this protein is UDP-3-O-acyl-N-acetylglucosamine deacetylase.